The following is a 44-amino-acid chain: 2S seed storage albumin protein (44 aa).

Intrachain disulfides connect Cys7/Cys42 and Cys19/Cys31.

Belongs to the 2S seed storage albumins family. As to quaternary structure, the mature protein consists of a small and a large chain linked by 2 disulfide bonds.

In terms of biological role, this is a 2S seed storage protein. Has antifungal activity. Inhibits spore germination in H.sativum (IC(50)=62.5 ug/ml) and P.betae (IC(50)=62.5 ug/ml). Inhibits growth of H.sativum, V.albo-atrum and P.infestans. This is 2S seed storage albumin protein from Taraxacum officinale (Common dandelion).